Here is an 81-residue protein sequence, read N- to C-terminus: DNA-directed RNA polymerase subunit Rpo6 (81 aa).

Belongs to the archaeal Rpo6/eukaryotic RPB6 RNA polymerase subunit family. In terms of assembly, part of the RNA polymerase complex.

Its subcellular location is the cytoplasm. The catalysed reaction is RNA(n) + a ribonucleoside 5'-triphosphate = RNA(n+1) + diphosphate. Its function is as follows. DNA-dependent RNA polymerase (RNAP) catalyzes the transcription of DNA into RNA using the four ribonucleoside triphosphates as substrates. This chain is DNA-directed RNA polymerase subunit Rpo6, found in Thermofilum pendens (strain DSM 2475 / Hrk 5).